A 564-amino-acid chain; its full sequence is Phenylalanine--tRNA ligase beta subunit (564 aa).

The 77-residue stretch at 286–362 (YFQNSLKINV…IGKGLDNFKS (77 aa)) folds into the B5 domain. 4 residues coordinate Mg(2+): Asp-340, Asp-346, Glu-349, and Glu-350.

It belongs to the phenylalanyl-tRNA synthetase beta subunit family. Type 2 subfamily. Tetramer of two alpha and two beta subunits. The cofactor is Mg(2+).

The protein resides in the cytoplasm. The catalysed reaction is tRNA(Phe) + L-phenylalanine + ATP = L-phenylalanyl-tRNA(Phe) + AMP + diphosphate + H(+). This is Phenylalanine--tRNA ligase beta subunit from Borrelia duttonii (strain Ly).